The following is an 88-amino-acid chain: Small ribosomal subunit protein uS15c (88 aa).

The protein belongs to the universal ribosomal protein uS15 family. In terms of assembly, part of the 30S ribosomal subunit.

The protein localises to the plastid. Its subcellular location is the chloroplast. The protein is Small ribosomal subunit protein uS15c (rps15) of Aethionema cordifolium (Lebanon stonecress).